The following is a 543-amino-acid chain: uncharacterized protein (543 aa).

A TRAM domain is found at 1-59; it reads MLKKNDIVEVEIVDLTHEGAGVAKVDGLVFFVENALPSEKILMRVLKVNKKIGFGKVEK. Positions 283, 312, 333, and 381 each coordinate S-adenosyl-L-methionine. The Nucleophile role is filled by C408.

It belongs to the class I-like SAM-binding methyltransferase superfamily. RNA M5U methyltransferase family.

This is an uncharacterized protein from Streptococcus pneumoniae serotype 4 (strain ATCC BAA-334 / TIGR4).